Here is a 181-residue protein sequence, read N- to C-terminus: Large ribosomal subunit protein uL6 (181 aa).

This sequence belongs to the universal ribosomal protein uL6 family. As to quaternary structure, part of the 50S ribosomal subunit.

This protein binds to the 23S rRNA, and is important in its secondary structure. It is located near the subunit interface in the base of the L7/L12 stalk, and near the tRNA binding site of the peptidyltransferase center. The sequence is that of Large ribosomal subunit protein uL6 from Flavobacterium psychrophilum (strain ATCC 49511 / DSM 21280 / CIP 103535 / JIP02/86).